The sequence spans 242 residues: Glutamine transport ATP-binding protein GlnQ (242 aa).

Positions 2–236 (ITFQNVNKHY…PKEERARLFL (235 aa)) constitute an ABC transporter domain. 34–41 (GPSGSGKS) lines the ATP pocket.

It belongs to the ABC transporter superfamily. As to quaternary structure, the complex is composed of two ATP-binding proteins (GlnQ), two transmembrane proteins (GlnM and GlnP) and a solute-binding protein (GlnH).

Its subcellular location is the cell membrane. In terms of biological role, part of the ABC transporter complex GlnHMPQ involved in glutamine transport. Probably responsible for energy coupling to the transport system. This is Glutamine transport ATP-binding protein GlnQ (glnQ) from Bacillus subtilis (strain 168).